Here is an 823-residue protein sequence, read N- to C-terminus: Protein Jade-3 (823 aa).

Residues 1 to 40 (MKRHRPVSSSESSDECPSTSFTSSSMYRKKSKNPKEQKKS) are disordered. Residues 8–20 (SSSESSDECPSTS) show a composition bias toward low complexity. Residues Lys-30, Lys-32, and Lys-35 each carry the N6-acetyllysine modification. A PHD-type 1 zinc finger spans residues 200–250 (DVICDVCRSPDSEEGNDMVFCDKCNVCVHQACYGILKIPEGSWLCRSCVLG). The C2HC pre-PHD-type zinc finger occupies 252–286 (YPQCVLCPKKGGAMKTTRTGTKWAHVSCALWIPEV). The PHD-type 2 zinc finger occupies 310-366 (LVCNLCKLKTGACIQCSVKSCITAFHVTCAFEHGLEMKTILDEGDEVKFKSFCLKHS). Disordered stretches follow at residues 543 to 585 (LKMP…PEEP) and 601 to 631 (KSNC…AEFY). A compositionally biased stretch (basic and acidic residues) spans 549–562 (TSEDCKDSSTETEH). Phosphoserine is present on residues Ser-566 and Ser-578. The residue at position 601 (Lys-601) is an N6-acetyllysine. Ser-608 carries the post-translational modification Phosphoserine. Lys-638 bears the N6-acetyllysine mark. The tract at residues 651–676 (SIGNGKNQPNSRVSSSNGLEGNWSGN) is disordered. The residue at position 735 (Lys-735) is an N6-acetyllysine. A disordered region spans residues 756–823 (TGRASYQETD…HPHSHSSMQR (68 aa)). 2 positions are modified to phosphoserine: Ser-774 and Ser-776. Over residues 781 to 809 (EGSKETPRVKRESSDRENPSHDSARECHG) the composition is skewed to basic and acidic residues.

This sequence belongs to the JADE family. As to quaternary structure, component of the HBO1 complex composed at least of ING4 or ING5, MYST2/HBO1, MEAF6, and one of JADE1, JADE2 and JADE3.

In terms of biological role, scaffold subunit of some HBO1 complexes, which have a histone H4 acetyltransferase activity. In Mus musculus (Mouse), this protein is Protein Jade-3 (Jade3).